We begin with the raw amino-acid sequence, 285 residues long: MEMO1 family protein Igni_0992 (285 aa).

This sequence belongs to the MEMO1 family.

The polypeptide is MEMO1 family protein Igni_0992 (Ignicoccus hospitalis (strain KIN4/I / DSM 18386 / JCM 14125)).